A 253-amino-acid polypeptide reads, in one-letter code: CENP-A recruiting complex protein mis20 (253 aa).

Positions 113-136 are disordered; it reads TGPTTSKNKHPSHSNTIRSPPYKV.

Component of the CENP-A recruiting complex composed of at least mis16, mis19, mis19 and mis20.

The protein localises to the cytoplasm. It is found in the cytoskeleton. The protein resides in the microtubule organizing center. Its subcellular location is the spindle pole body. It localises to the chromosome. The protein localises to the centromere. Its function is as follows. Component of the CENP-A recruiting complex that ensures the integrity of mitotic spindles through maintenance of kinetochore factors mis6/CENP-I and cnp1/CENP-A. Seems dispensable for proper chromosome segregation. The sequence is that of CENP-A recruiting complex protein mis20 from Schizosaccharomyces pombe (strain 972 / ATCC 24843) (Fission yeast).